A 99-amino-acid chain; its full sequence is U1-theraphotoxin-Lsp1c (99 aa).

Residues 1–23 form the signal peptide; the sequence is MRKITIRALLLCSLLLVFHTSAA. Positions 24–50 are excised as a propeptide; it reads AELQAQEGHLMIPGDTDTALETVDDER. 4 disulfides stabilise this stretch: Cys-54–Cys-67, Cys-58–Cys-91, Cys-72–Cys-74, and Cys-85–Cys-96.

The protein belongs to the neurotoxin 12 (Hwtx-2) family. 04 (lasiotoxin) subfamily. In terms of tissue distribution, expressed by the venom gland.

Its subcellular location is the secreted. Functionally, toxin that causes irreversible contractile paralysis into adult Aedes aegypti resulting in 100% mortality after 24 hours. The polypeptide is U1-theraphotoxin-Lsp1c (Lasiodora sp. (strain IBSP 8539) (Brazilian salmon pink birdeater)).